Consider the following 779-residue polypeptide: Protein zer-1 homolog (779 aa).

Ala-2 carries the N-acetylalanine modification. LRR repeat units follow at residues 226–245 (SLVLYNMDLSDDHIRVIVQL), 246–281 (HKLRSKILTCGPHLISSHLDISRDRLSSYYKFKLTR), and 291–315 (LGNLMSLDISGHMILENCSISKTDE). ARM repeat units lie at residues 440-480 (RSEQ…NFSI), 524-569 (DNDH…NITD), 571-613 (TPDN…NVAE), 615-656 (KELR…HIMF), and 727-769 (PDKY…HCSN).

The protein belongs to the zyg-11 family. In terms of assembly, interacts with the ELOC-ELOB/Elongin BC complex. Part of an E3 ubiquitin ligase complex including ZER1, CUL2 and Elongin BC.

Its function is as follows. Serves as substrate adapter subunit in the E3 ubiquitin ligase complex ZYG11B-CUL2-Elongin BC. Acts redudantly with ZYG11B to target substrates bearing N-terminal glycine degrons for proteasomal degradation. Involved in the clearance of proteolytic fragments generated by caspase cleavage during apoptosis since N-terminal glycine degrons are strongly enriched at caspase cleavage sites. Also important in the quality control of protein N-myristoylation in which N-terminal glycine degrons are conditionally exposed after a failure of N-myristoylation. The sequence is that of Protein zer-1 homolog from Mus musculus (Mouse).